The primary structure comprises 144 residues: Ribosomally synthesized cyclic peptide phomopsin precursor phomA' (144 aa).

Residues 1–18 form the signal peptide; that stretch reads MRFTPAIVIAAFCSLAVA. 9 propeptides span residues 19–35, 42–50, 57–65, 72–79, 86–94, 101–108, 115–123, 130–137, and K144; these read APAA…AVED, KKRGEAVED, and KRGEAVED.

Post-translationally, phomA' is processed by several endopeptidases including kexin proteases as well as the cluster-specific S41 family peptidase phomP1' and the peptidase phomG' to produce 5 identical copies of the hexapeptide Tyr-Val-Ile-Pro-Ile-Asp and 3 identical copies of Tyr-Val-Ile-Pro-Phe-Asp, that are further modified into phomapsins A and P, respectively. The timing and order of proteolysis of the phomA' precursor and PTMs are still unknown. Two tyrosinase-like enzyme phomQ1' and PhomQ2, catalyze the chlorination and hydroxylation of Tyr, respectively. PhomYb', is proposed to be involved in the construction of the macrocyclic structure. The other four ustYa family proteins may be involved in PTMs that generate the unique structure of phomopsin A. PhomYa' is required for the hydroxylation of C-beta of Tyr. PhomYc', PhomYd', and PhomYe' are responsible for the biosynthesis of 2,3-dehydroisoleucine (dIle), 2,3-dehydroaspartic acid (dAsp), and 3,4-dehydroproline (dPro), respectively. While dIle formation by phomYc is indispensable for the installation of dAsp by phomYd, the order of the other PTMs have not been elucidated yet. Most of the biosynthetic enzymes likely have broad substrate specificity, and thus, there might be a metabolic grid from a precursor to phomopsin A. The enzyme(s) responsible for the biosynthesis of 3,4-dehydrovaline (dVal) have also not been identified yet. Finally, PhomM' acts as an S-adenosylmethionine-dependent alpha-N-methyltransferase that catalyzes two successive N-methylation reactions, converting N-desmethyl-phomopsin A to phomopsin A and phomopsin A further to an N,N-dimethylated congener called phomopsin E.

It participates in mycotoxin biosynthesis. In terms of biological role, ribosomally synthesized cyclic peptide phomopsin precursor; part of the gene cluster that mediates the biosynthesis of the phomopsins, a group of hexapeptide mycotoxins which infects lupins and causes lupinosis disease in livestock. The phomA' translated product contains a 5-fold repeated peptide embedding the hexapeptide Tyr-Val-Ile-Pro-Ile-Asp and a 3-fold repeated peptide embedding the hexapeptide Tyr-Val-Ile-Pro-Phe-Asp, that is converted into phomapsin A and phomapsin P, respectively. After being excised from the precursor peptide by kexin proteases, the core peptides are cyclized and modified post-translationally by enzymes encoded within the corresponding gene cluster. This chain is Ribosomally synthesized cyclic peptide phomopsin precursor phomA', found in Diaporthe leptostromiformis (Lupinosis disease fungus).